The sequence spans 102 residues: NADH-quinone oxidoreductase subunit K 1 (102 aa).

The next 3 membrane-spanning stretches (helical) occupy residues 5 to 25 (LYEV…CVVA), 30 to 50 (VIMM…TFVG), and 62 to 82 (VFSL…LAMV).

This sequence belongs to the complex I subunit 4L family. In terms of assembly, NDH-1 is composed of 14 different subunits. Subunits NuoA, H, J, K, L, M, N constitute the membrane sector of the complex.

The protein localises to the cell inner membrane. It carries out the reaction a quinone + NADH + 5 H(+)(in) = a quinol + NAD(+) + 4 H(+)(out). NDH-1 shuttles electrons from NADH, via FMN and iron-sulfur (Fe-S) centers, to quinones in the respiratory chain. The immediate electron acceptor for the enzyme in this species is believed to be ubiquinone. Couples the redox reaction to proton translocation (for every two electrons transferred, four hydrogen ions are translocated across the cytoplasmic membrane), and thus conserves the redox energy in a proton gradient. The protein is NADH-quinone oxidoreductase subunit K 1 of Geobacter sp. (strain M21).